The primary structure comprises 248 residues: Glutathione S-transferase omega-2 (248 aa).

In terms of domain architecture, GST N-terminal spans 22 to 101 (GVIRIYSMRF…YLDDVYPGRK (80 aa)). C32 (nucleophile) is an active-site residue. Glutathione contacts are provided by residues K59, I72, and 85–86 (ES). In terms of domain architecture, GST C-terminal spans 106-231 (DPYERARQKM…VFLGFLNLYF (126 aa)).

Belongs to the GST superfamily. Omega family.

It catalyses the reaction RX + glutathione = an S-substituted glutathione + a halide anion + H(+). The catalysed reaction is L-dehydroascorbate + 2 glutathione = glutathione disulfide + L-ascorbate. The enzyme catalyses methylarsonate + 2 glutathione + H(+) = methylarsonous acid + glutathione disulfide + H2O. In terms of biological role, exhibits glutathione-dependent thiol transferase activity. Has high dehydroascorbate reductase activity and may contribute to the recycling of ascorbic acid. Participates in the biotransformation of inorganic arsenic and reduces monomethylarsonic acid (MMA). This chain is Glutathione S-transferase omega-2 (Gsto2), found in Mus musculus (Mouse).